A 46-amino-acid chain; its full sequence is Photosystem II reaction center protein K (46 aa).

Positions Met-1–Ala-9 are excised as a propeptide. The chain crosses the membrane as a helical span at residues Leu-25–Phe-45.

It belongs to the PsbK family. PSII is composed of 1 copy each of membrane proteins PsbA, PsbB, PsbC, PsbD, PsbE, PsbF, PsbH, PsbI, PsbJ, PsbK, PsbL, PsbM, PsbT, PsbX, PsbY, Psb30/Ycf12, peripheral proteins PsbO, CyanoQ (PsbQ), PsbU, PsbV and a large number of cofactors. It forms dimeric complexes.

The protein resides in the cellular thylakoid membrane. Its function is as follows. One of the components of the core complex of photosystem II (PSII). PSII is a light-driven water:plastoquinone oxidoreductase that uses light energy to abstract electrons from H(2)O, generating O(2) and a proton gradient subsequently used for ATP formation. It consists of a core antenna complex that captures photons, and an electron transfer chain that converts photonic excitation into a charge separation. The sequence is that of Photosystem II reaction center protein K from Prochlorococcus marinus (strain MIT 9215).